A 733-amino-acid chain; its full sequence is MASSLYRQLISQNYYSTGNEILLDQQTNKTTVDYVDAGNYTYAQLPPTTWGAESTYESAFSAPEITGPYTNTVIKLSDLSDSNVWVLYQKPTSTVKLLKNGPESYSWNLAAFELWYGKANTTVTSDYYSGMTNSEKSVEVDHDSLVLFWNEGSTALSNKVINFSWNVGGVLIKLTSNTRIDICMANMDNFTSDSFNWEEWTHNFPRSASMNIYTDYYLASVDPYSQIRALQQPIITTVEMKMVKVKREGSINVDEVVSKDSLWQEVRYVRDITLQCKIESEVVKGGGWGYDYTSVAFKTINHTYSYTRAGEAVNAHVTISFNNLKERSYGGSLPTDFKIGRFDIIDVDTYMYIDYWDDSEIFKNMVYVRDLRADMGGFNYSSAMSYYFRIPVGQYPGLHSSGVRFTYERSLLSQQFTDQVALNSMRFVFRATSSDGWFMTAGNINARRIASGTGFAYSDGYVTETVGTVSFISLIPSNPNYQTPIASSSTVRMDLERKINDLRNDFNELASSVALGDILSLAMSPLTFANLLESVPAIASSVKDVAANVMKKFKTTKMFKKAAKPKYKEYIIGDLLEDVTNLPRSTTAMDFDDITSAVMVSTTNRLQLTDVETLSEIVARSADDFIPNRAYRMIEDGMVHEATPNGVFSYDLATLQQRNFDMEKFMQLASKSPVISAIVDFATLKAMRDTYGVSTDIMYKLVASDAPTIVSFINNNNPLIRNRIEGLLRQCRI.

Residues 492-512 are a coiled coil; sequence RMDLERKINDLRNDFNELASS.

This sequence belongs to the rotavirus VP4 family. In terms of assembly, homotrimer. VP4 adopts a dimeric appearance above the capsid surface, while forming a trimeric base anchored inside the capsid layer. Only hints of the third molecule are observed above the capsid surface. It probably performs a series of molecular rearrangements during viral entry. Prior to trypsin cleavage, it is flexible. The priming trypsin cleavage triggers its rearrangement into rigid spikes with approximate two-fold symmetry of their protruding parts. After an unknown second triggering event, cleaved VP4 may undergo another rearrangement, in which two VP5* subunits fold back on themselves and join a third subunit to form a tightly associated trimer, shaped like a folded umbrella. Interacts with VP6. Interacts with VP7. Homotrimer. The trimer is coiled-coil stabilized by its C-terminus, however, its N-terminus, known as antigen domain or 'body', seems to be flexible allowing it to self-associate either as a dimer or a trimer. Proteolytic cleavage by trypsin results in activation of VP4 functions and greatly increases infectivity. The penetration into the host cell is dependent on trypsin treatment of VP4. It produces two peptides, VP5* and VP8* that remain associated with the virion. Cleavage of VP4 by trypsin probably occurs in vivo in the lumen of the intestine prior to infection of enterocytes. Trypsin seems to be incorporated into the three-layered viral particles but remains inactive as long as the viral outer capsid is intact and would only be activated upon the solubilization of the latter.

The protein resides in the virion. It is found in the host rough endoplasmic reticulum. It localises to the host cell membrane. Its subcellular location is the host endoplasmic reticulum-Golgi intermediate compartment. Functionally, spike-forming protein that mediates virion attachment to the host epithelial cell receptors and plays a major role in cell penetration, determination of host range restriction and virulence. Rotavirus attachment and entry into the host cell probably involves multiple sequential contacts between the outer capsid proteins VP4 and VP7, and the cell receptors. It is subsequently lost, together with VP7, following virus entry into the host cell. Following entry into the host cell, low intracellular or intravesicular Ca(2+) concentration probably causes the calcium-stabilized VP7 trimers to dissociate from the virion. This step is probably necessary for the membrane-disrupting entry step and the release of VP4, which is locked onto the virion by VP7. In terms of biological role, forms the spike 'foot' and 'body' and acts as a membrane permeabilization protein that mediates release of viral particles from endosomal compartments into the cytoplasm. During entry, the part of VP5* that protrudes from the virus folds back on itself and reorganizes from a local dimer to a trimer. This reorganization may be linked to membrane penetration. Its function is as follows. Forms the head of the spikes and mediates the recognition of specific host cell surface glycans. It is the viral hemagglutinin and an important target of neutralizing antibodies. The protein is Outer capsid protein VP4 of Bos taurus (Bovine).